The following is a 417-amino-acid chain: MIVYSELSLKGKKAKDAAYKLGSLSSQVKNKALEAMAYALVAQEEEILAANALDMEAGRQKGMSKALLDRLMLNKKRIEEMAEGLYALVSLPDPIGEVKRQWRRPNGLEIGQVRVPLGVVGIIYEARPNVTVDAAGLCLKTGNAVILRGGSEAIRSNMAIVKAISKASEEAGIPEGAIQLVEDSSREVAQQMMTMNEYLDVLIPRGGAGLIQAVVKNATVPVIETGVGNCHIYVDADADLEMAEKIIINAKCQRPGVCNAAESLLVHQDVARKFIPHIGKVLTEMNVELRGCPRTLSLFSGIKEATDEDYATEFLDLILAVKIVDSFDEALEHIRKYSTGHSEAIVTRDYSRAREFTRRVDAAAVYVNASTRFTDGFQFGMGAEIGISTQKLHARGPMGLNELTTIKYVCYGDGQIR.

This sequence belongs to the gamma-glutamyl phosphate reductase family.

The protein localises to the cytoplasm. It carries out the reaction L-glutamate 5-semialdehyde + phosphate + NADP(+) = L-glutamyl 5-phosphate + NADPH + H(+). It functions in the pathway amino-acid biosynthesis; L-proline biosynthesis; L-glutamate 5-semialdehyde from L-glutamate: step 2/2. Catalyzes the NADPH-dependent reduction of L-glutamate 5-phosphate into L-glutamate 5-semialdehyde and phosphate. The product spontaneously undergoes cyclization to form 1-pyrroline-5-carboxylate. The protein is Gamma-glutamyl phosphate reductase of Heliobacterium modesticaldum (strain ATCC 51547 / Ice1).